A 573-amino-acid polypeptide reads, in one-letter code: Lauric acid 10-hydroxylase (573 aa).

2 helical membrane-spanning segments follow: residues 3-23 (YVNILLGLFFTWFLVNGLMSL) and 298-318 (LFPTPFLPFIIICPFLYLLIF). Cysteine 516 is a heme binding site.

Belongs to the cytochrome P450 family. Heme is required as a cofactor. As to expression, mostly expressed in flowers and leaves and, at low levels, in roots and stems.

It localises to the endoplasmic reticulum membrane. It catalyses the reaction an omega-methyl-medium-chain fatty acid + reduced [NADPH--hemoprotein reductase] + O2 = an omega-hydroxy-medium-chain fatty acid + oxidized [NADPH--hemoprotein reductase] + H2O + H(+). It carries out the reaction decanoate + reduced [NADPH--hemoprotein reductase] + O2 = 10-hydroxydecanoate + oxidized [NADPH--hemoprotein reductase] + H2O + H(+). The enzyme catalyses dodecanoate + reduced [NADPH--hemoprotein reductase] + O2 = 12-hydroxydodecanoate + oxidized [NADPH--hemoprotein reductase] + H2O + H(+). The protein operates within lipid metabolism; fatty acid metabolism. In terms of biological role, cytochrome P450 hydroxylase catalyzing the conversion of decanoate (capric acid) and dodecanoate (lauric acid) to their corresponding omega-hydroxy metabolites, 10-hydroxydecanoate and 12-hydroxydodecanoate, respectively; these hydroxylated components affect plant growth, including reducing root elongation. The sequence is that of Lauric acid 10-hydroxylase from Petunia hybrida (Petunia).